A 291-amino-acid polypeptide reads, in one-letter code: Transmembrane O-methyltransferase (291 aa).

Residues 31–51 (VGTMSPAIALAFLPLVVTLLV) form a helical membrane-spanning segment. Residues Glu-137, 139-140 (GT), Ser-145, Glu-163, and Ser-193 contribute to the S-adenosyl-L-methionine site.

The protein belongs to the class I-like SAM-binding methyltransferase superfamily. Cation-dependent O-methyltransferase family. Interacts with LHFPL5, PCDH15, TMC1, TMC2 and TMIE. Interacts directly with TMC1. The interaction of TOMT with TMC1 and TMC2 is required for the transportation of TMC1/2 into the stereocilia of hair cells.

Its subcellular location is the membrane. The protein resides in the cytoplasm. It localises to the endoplasmic reticulum. The enzyme catalyses a catechol + S-adenosyl-L-methionine = a guaiacol + S-adenosyl-L-homocysteine + H(+). Catalyzes the O-methylation, and thereby the inactivation, of catecholamine neurotransmitters and catechol hormones. Required for auditory function. Component of the cochlear hair cell's mechanotransduction (MET) machinery. Involved in the assembly of the asymmetric tip-link MET complex. Required for transportation of TMC1 and TMC2 proteins into the mechanically sensitive stereocilia of the hair cells. The function in MET is independent of the enzymatic activity. The protein is Transmembrane O-methyltransferase of Homo sapiens (Human).